Here is an 859-residue protein sequence, read N- to C-terminus: Ribose import ATP-binding protein RbsA 1 (859 aa).

Positions 1 to 351 are disordered; that stretch reads MRASLENGDD…AARAPDEASE (351 aa). The interval 1-353 is unknown; the sequence is MRASLENGDD…RAPDEASEEA (353 aa). The span at 8–17 shows a compositional bias: basic and acidic residues; sequence GDDHDAHRLV. A compositionally biased stretch (basic residues) spans 28 to 43; the sequence is RAARRRAFARARRGER. Basic and acidic residues-rich tracts occupy residues 44-80, 89-129, and 137-167; these read RARGTAEDRHDVPGAEQPVLRDDAKGARRGGRVDRRA, RREQ…EEGG, and RERERPGRRVRRLEEFRRGRDVVRLPREGDR. A compositionally biased stretch (basic residues) spans 168-179; sequence RRRRSRDPRRHP. Composition is skewed to basic and acidic residues over residues 193-214, 239-250, 263-281, 288-301, and 308-323; these read GAREIPEREDRRRAERQAGARE, RLDGRAVRDRGV, AGGDRGDAEAELEVHRDVR, DSPRDRHRAREEVG, and DSGRREADRQGQREDV. ABC transporter domains lie at 358-594 and 607-851; these read LALT…VGRR and RDAA…TSDV. 390-397 contributes to the ATP binding site; that stretch reads GENGAGKS.

Belongs to the ABC transporter superfamily. Ribose importer (TC 3.A.1.2.1) family. As to quaternary structure, the complex is composed of an ATP-binding protein (RbsA), two transmembrane proteins (RbsC) and a solute-binding protein (RbsB).

The protein localises to the cell inner membrane. The catalysed reaction is D-ribose(out) + ATP + H2O = D-ribose(in) + ADP + phosphate + H(+). In terms of biological role, part of the ABC transporter complex RbsABC involved in ribose import. Responsible for energy coupling to the transport system. This chain is Ribose import ATP-binding protein RbsA 1, found in Burkholderia pseudomallei (strain 1710b).